The following is a 753-amino-acid chain: 5-methyltetrahydropteroyltriglutamate--homocysteine methyltransferase (753 aa).

5-methyltetrahydropteroyltri-L-glutamate is bound by residues 17-20 and Lys-117; that span reads RELK. L-homocysteine is bound by residues 431-433 and Glu-484; that span reads IGS. L-methionine contacts are provided by residues 431–433 and Glu-484; that span reads IGS. 5-methyltetrahydropteroyltri-L-glutamate contacts are provided by residues 515–516 and Trp-561; that span reads RC. Residue Asp-599 participates in L-homocysteine binding. Asp-599 contributes to the L-methionine binding site. Glu-605 lines the 5-methyltetrahydropteroyltri-L-glutamate pocket. Residues His-641, Cys-643, and Glu-665 each contribute to the Zn(2+) site. Residue His-694 is the Proton donor of the active site. Cys-726 contributes to the Zn(2+) binding site.

It belongs to the vitamin-B12 independent methionine synthase family. Zn(2+) is required as a cofactor.

The enzyme catalyses 5-methyltetrahydropteroyltri-L-glutamate + L-homocysteine = tetrahydropteroyltri-L-glutamate + L-methionine. The protein operates within amino-acid biosynthesis; L-methionine biosynthesis via de novo pathway; L-methionine from L-homocysteine (MetE route): step 1/1. Catalyzes the transfer of a methyl group from 5-methyltetrahydrofolate to homocysteine resulting in methionine formation. The chain is 5-methyltetrahydropteroyltriglutamate--homocysteine methyltransferase from Escherichia coli O157:H7 (strain EC4115 / EHEC).